Reading from the N-terminus, the 150-residue chain is 3-hydroxyacyl-[acyl-carrier-protein] dehydratase FabZ (150 aa).

His-57 is an active-site residue.

This sequence belongs to the thioester dehydratase family. FabZ subfamily.

The protein resides in the cytoplasm. The catalysed reaction is a (3R)-hydroxyacyl-[ACP] = a (2E)-enoyl-[ACP] + H2O. In terms of biological role, involved in unsaturated fatty acids biosynthesis. Catalyzes the dehydration of short chain beta-hydroxyacyl-ACPs and long chain saturated and unsaturated beta-hydroxyacyl-ACPs. In Mannheimia succiniciproducens (strain KCTC 0769BP / MBEL55E), this protein is 3-hydroxyacyl-[acyl-carrier-protein] dehydratase FabZ.